Here is a 156-residue protein sequence, read N- to C-terminus: Arginine repressor (156 aa).

The protein belongs to the ArgR family.

The protein localises to the cytoplasm. Its pathway is amino-acid biosynthesis; L-arginine biosynthesis [regulation]. In terms of biological role, regulates arginine biosynthesis genes. The chain is Arginine repressor from Escherichia fergusonii (strain ATCC 35469 / DSM 13698 / CCUG 18766 / IAM 14443 / JCM 21226 / LMG 7866 / NBRC 102419 / NCTC 12128 / CDC 0568-73).